The following is a 162-amino-acid chain: SCF ubiquitin ligase complex protein SKP1a (162 aa).

Residue Ser2 is modified to N-acetylserine. Residues 100–162 (ILAANYLDIK…NEWCEDKGGN (63 aa)) form an interaction with the F-box domain of F-box proteins region. The residue at position 143 (Pro143) is a 4-hydroxyproline. A glycan (O-linked (GlcNAc...) hydroxyproline) is linked at Pro143.

The protein belongs to the SKP1 family. Multiprotein complex (SCF) with cullin and F-box-containing protein. Capable of undergoing aggregation. In terms of processing, O-linked glycan consists of linear Gal-Gal-Fuc-Gal-GlcNAc. FpaA and fpaB seem to be identically glycosylated. Glycosylation is required for nuclear enrichment. Post-translationally, hydroxylated by phyA.

The protein localises to the cytoplasm. It localises to the nucleus. In Dictyostelium discoideum (Social amoeba), this protein is SCF ubiquitin ligase complex protein SKP1a (fpaA).